Here is a 260-residue protein sequence, read N- to C-terminus: Putative sgc region transcriptional regulator (260 aa).

The HTH deoR-type domain maps to 5–61 (RPDRIKQMLHYLWQHRHLSTQQAMELFGYAEATVRRDFQYIVNQYPGMIRGHGCLDF). The segment at residues 22–41 (LSTQQAMELFGYAEATVRRD) is a DNA-binding region (H-T-H motif).

In terms of biological role, putative transcriptional regulator for the sgcREAQCX region. The polypeptide is Putative sgc region transcriptional regulator (sgcR) (Escherichia coli (strain K12)).